A 349-amino-acid chain; its full sequence is Nitrilase, bromoxynil-specific (349 aa).

One can recognise a CN hydrolase domain in the interval 5–274; sequence FKAAAVQAEP…EGIVYAEIDL (270 aa). The Proton acceptor role is filled by E45. The active-site Proton donor is K127. C161 functions as the Nucleophile in the catalytic mechanism.

Belongs to the carbon-nitrogen hydrolase superfamily. Nitrilase family. As to quaternary structure, homodimer.

It carries out the reaction a nitrile + 2 H2O = a carboxylate + NH4(+). Specific for the herbicide bromoxynil (3,5-dibromo-4-hydroxybenzonitrile); converts it to its metabolite 3,5-dibromo-4-hydroxybenzoic acid. The chain is Nitrilase, bromoxynil-specific (bxn) from Klebsiella pneumoniae subsp. ozaenae.